Reading from the N-terminus, the 263-residue chain is Aquaglyceroporin (263 aa).

Positions M1–R22 are disordered. 6 consecutive transmembrane segments (helical) span residues K41–A61, G64–F84, L113–I133, V157–M177, L180–M200, and V222–G242.

The protein belongs to the MIP/aquaporin (TC 1.A.8) family. In terms of assembly, multimer.

The protein localises to the vacuole membrane. It carries out the reaction H2O(in) = H2O(out). The catalysed reaction is glycerol(in) = glycerol(out). It catalyses the reaction urea(in) = urea(out). In terms of biological role, mediates water and glycerol transport across cell membranes. Permeable to selected sugar alcohols of up to five carbons and urea. Permeable to methylamine/methylammonium. This is Aquaglyceroporin from Toxoplasma gondii (strain ATCC 50611 / Me49).